The sequence spans 391 residues: U-box domain-containing protein 57 (391 aa).

In terms of domain architecture, MIF4G spans 1-178 (MVKNSYVLFA…DLTERLLQVE (178 aa)). One can recognise a U-box domain in the interval 322–391 (QPPPSFICPI…LRSAIEELGR (70 aa)).

It catalyses the reaction S-ubiquitinyl-[E2 ubiquitin-conjugating enzyme]-L-cysteine + [acceptor protein]-L-lysine = [E2 ubiquitin-conjugating enzyme]-L-cysteine + N(6)-ubiquitinyl-[acceptor protein]-L-lysine.. The protein operates within protein modification; protein ubiquitination. Functionally, functions as an E3 ubiquitin ligase. This Arabidopsis thaliana (Mouse-ear cress) protein is U-box domain-containing protein 57 (PUB57).